The primary structure comprises 430 residues: DNA repair protein recA homolog 3, mitochondrial (430 aa).

The transit peptide at 1-35 (MARILRNVYSLRSSLFSSELLRRSVVGTSFQLRGF) directs the protein to the mitochondrion. 119-126 (GPEASGKT) lines the ATP pocket. The segment at 385–415 (DEAADKETESESEEEDSLRVVVSPDNTDDES) is disordered.

The protein belongs to the RecA family.

It localises to the mitochondrion. Functionally, involved in recombination ability and DNA strand transfer activity. The polypeptide is DNA repair protein recA homolog 3, mitochondrial (Arabidopsis thaliana (Mouse-ear cress)).